A 418-amino-acid polypeptide reads, in one-letter code: Putative L-glutamine:3-amino-2,3-dideoxy-scyllo-inosose aminotransferase (418 aa).

Position 199 is an N6-(pyridoxal phosphate)lysine (Lys-199).

This sequence belongs to the DegT/DnrJ/EryC1 family. L-glutamine:2-deoxy-scyllo-inosose/scyllo-inosose aminotransferase subfamily. The cofactor is pyridoxal 5'-phosphate.

It carries out the reaction 3-amino-2,3-dideoxy-scyllo-inosose + L-glutamine = 2-deoxystreptamine + 2-oxoglutaramate. It participates in metabolic intermediate biosynthesis; 2-deoxystreptamine biosynthesis; 2-deoxystreptamine from D-glucose 6-phosphate: step 4/4. It functions in the pathway antibiotic biosynthesis; gentamicin biosynthesis. Functionally, catalyzes the transamination of 3-amino-2,3-dideoxy-scyllo-inosose (amino-DOI) into 2-deoxystreptamine (DOS). This chain is Putative L-glutamine:3-amino-2,3-dideoxy-scyllo-inosose aminotransferase (gtmD), found in Micromonospora echinospora (Micromonospora purpurea).